Reading from the N-terminus, the 341-residue chain is Transcription factor JunD (341 aa).

A disordered region spans residues 21–49; that stretch reads VAGAAGAPGGGGFAPPGRAFPGAPPTSSM. The short motif at 35–47 is the Menin-binding motif (MBM) element; that stretch reads PPGRAFPGAPPTS. The MAP kinase docking motif; essential for its phosphorylation motif lies at 51-60; the sequence is KKDALTLSLA. The tract at residues 65–85 is disordered; the sequence is AGLKPGSATAPSALRPDGAPD. Position 90 is a phosphoserine (Ser-90). Residue Ser-100 is modified to Phosphoserine; by MAPK8. Thr-117 is modified (phosphothreonine). The tract at residues 155–176 is disordered; that stretch reads AATAATSGAPAPPAPADLAATP. Phosphoserine is present on residues Ser-245, Ser-249, and Ser-253. The interval 262-289 is basic motif; it reads RIKAERKRLRNRIAASKCRKRKLERISR. The bZIP domain maps to 262–325; that stretch reads RIKAERKRLR…AQLKQKVLSH (64 aa). Residues 290–318 form a leucine-zipper region; sequence LEEKVKTLKSQNTELASTASLLREQVAQL.

It belongs to the bZIP family. Jun subfamily. In terms of assembly, heterodimer; binds DNA as a heterodimer. Component of an AP-1 transcription factor complex composed of JUN-FOS heterodimers. As part of the AP-1 transcription factor complex, forms heterodimers with FOS proteins, thereby binding to the AP-1 consensus sequence and stimulating transcription. Forms heterodimers with FOSB; thereby binding to the AP-1 consensus sequence. Interacts (via MBM motif) with MEN1; this interaction represses transcriptional activation. Interacts with MAPK10; this interaction is inhibited in the presence of MEN1. Phosphorylated by MAP kinases MAPK8 and MAPK10; phosphorylation is inhibited in the presence of MEN1.

Its subcellular location is the nucleus. Functionally, transcription factor binding AP-1 sites. Heterodimerizes with proteins of the FOS family to form an AP-1 transcription factor complex, thereby enhancing their DNA binding activity to an AP-1 consensus sequence 3'-TGA[GC]TCA-5' and enhancing their transcriptional activity. In Rattus norvegicus (Rat), this protein is Transcription factor JunD (Jund).